A 306-amino-acid chain; its full sequence is Ribosomal RNA small subunit methyltransferase H (306 aa).

Residues 33–35, Asp51, Phe78, Asp96, and Gln103 each bind S-adenosyl-L-methionine; that span reads GGY.

It belongs to the methyltransferase superfamily. RsmH family.

It is found in the cytoplasm. It carries out the reaction cytidine(1402) in 16S rRNA + S-adenosyl-L-methionine = N(4)-methylcytidine(1402) in 16S rRNA + S-adenosyl-L-homocysteine + H(+). In terms of biological role, specifically methylates the N4 position of cytidine in position 1402 (C1402) of 16S rRNA. This Rickettsia typhi (strain ATCC VR-144 / Wilmington) protein is Ribosomal RNA small subunit methyltransferase H.